We begin with the raw amino-acid sequence, 764 residues long: Complement factor B (764 aa).

A signal peptide spans 1–25; the sequence is MGSNLSPQLCLMPFILGLLSGGVTT. Sushi domains follow at residues 35-100, 101-160, and 163-220; these read GSCS…ECRA, IHCP…ICDN, and GYCS…SCQD. Cystine bridges form between C37–C76, C62–C98, C103–C145, C131–C158, C165–C205, and C191–C218. Residues N122 and N142 are each glycosylated (N-linked (GlcNAc...) asparagine). Positions 270-469 constitute a VWFA domain; that stretch reads NIYLVLDGSD…NLEDVFYQMI (200 aa). Residues S278 and S280 each contribute to the Mg(2+) site. Positions 278 and 280 each coordinate Mn(2+). N285 is a glycosylation site (N-linked (GlcNAc...) asparagine). K291 carries N-linked (Glc) (glycation) lysine glycosylation. T353 contributes to the Mg(2+) binding site. T353 is a Mn(2+) binding site. An N-linked (GlcNAc...) asparagine glycan is attached at N378. The Peptidase S1 domain maps to 477 to 757; it reads LCGMVWEHRK…VLPWLKEKLQ (281 aa). Disulfide bonds link C478-C596, C511-C527, C599-C615, C656-C682, and C695-C725. Residues H526 and D576 each act as charge relay system in the active site. Residue S699 is the Charge relay system of the active site.

The protein belongs to the peptidase S1 family. In terms of assembly, monomer. Interacts with complement C3b; this interaction is dependent on the presence of Mg(2+). As to quaternary structure, catalytic component of the C3 convertase of the alternative complement pathway, also named C3bBb, composed of complement factor B Bb and complement C3b. Catalytic component of the C5 convertase of the alternative complement pathway, also named C3bBb3b, composed of complement factor B Bb and additional molecules of complement C3b. Interacts to CFP; this interaction contributes to the stabilization of the active C3-convertase enzyme complex. Mg(2+) is required as a cofactor. It depends on Mn(2+) as a cofactor. Post-translationally, cleaved by CFD following activation of the alternative complement system, generating Ba and Bb chains. Cleavage and activation takes place when CFB is already associated with complement C3b.

It localises to the secreted. The protein resides in the cell surface. The enzyme catalyses Cleavage of Arg-|-Ser bond in complement component C3 alpha-chain to yield C3a and C3b, and Arg-|-Xaa bond in complement component C5 alpha-chain to yield C5a and C5b.. Precursor of the catalytic component of the C3 and C5 convertase complexes of the alternative pathway of the complement system, a cascade of proteins that leads to phagocytosis and breakdown of pathogens and signaling that strengthens the adaptive immune system. The alternative complement pathway acts as an amplification loop that enhances other complement pathways (classical, lectin and GZMK) by promoting formation of additional C3 and C5 convertases. CFB is cleaved and activated by CFD to generate Ba and Bb chains; Bb chain constituting the catalytic component of the C3 and C5 convertases. In terms of biological role, serine protease component of the complement C3 and C5 convertase complexes of the alternative complement pathway. Following cleavage and activation by factor D (CFD), forms the C3 convertase together with complement C3b. As part of the C3 convertase, cleaves and activates C3 into C3a anaphylatoxin and C3b opsonin, the next components of the complement pathways. When an additional complement C3b molecule binds to the C3 convertase, forms the C5 convertase, which cleaves and activates C5 into C5a anaphylatoxin and C5b component of the membrane attack complex. Its function is as follows. Involved in proliferation and differentiation of preactivated B-lymphocytes, rapid spreading of peripheral blood monocytes, stimulation of lymphocyte blastogenesis and lysis of erythrocytes. The chain is Complement factor B from Homo sapiens (Human).